The following is a 529-amino-acid chain: Glutamyl-tRNA(Gln) amidotransferase subunit B-2, chloroplastic/mitochondrial (529 aa).

Residues 17–61 (STRVSLPRGSIPPPPTSSSSSSSSSREGRRPRFFSTTTTSAERPV) are disordered.

The protein belongs to the GatB/GatE family. GatB subfamily. In terms of assembly, subunit of the heterotrimeric GatCAB amidotransferase (AdT) complex, composed of A, B and C subunits.

It is found in the mitochondrion. The protein resides in the plastid. Its subcellular location is the chloroplast. The catalysed reaction is L-glutamyl-tRNA(Gln) + L-glutamine + ATP + H2O = L-glutaminyl-tRNA(Gln) + L-glutamate + ADP + phosphate + H(+). Functionally, allows the formation of correctly charged Gln-tRNA(Gln) through the transamidation of misacylated Glu-tRNA(Gln) in chloroplasts and mitochondria. The reaction takes place in the presence of glutamine and ATP through an activated gamma-phospho-Glu-tRNA(Gln). The polypeptide is Glutamyl-tRNA(Gln) amidotransferase subunit B-2, chloroplastic/mitochondrial (Micromonas commoda (strain RCC299 / NOUM17 / CCMP2709) (Picoplanktonic green alga)).